We begin with the raw amino-acid sequence, 340 residues long: Ketol-acid reductoisomerase (NADP(+)) (340 aa).

A KARI N-terminal Rossmann domain is found at Met-1–Thr-182. Residues Tyr-24–Gln-27, Arg-48, Ser-51, Ser-53, and Asp-83–Gln-86 contribute to the NADP(+) site. Residue His-108 is part of the active site. NADP(+) is bound at residue Gly-134. The 147-residue stretch at Asn-183–Ile-329 folds into the KARI C-terminal knotted domain. 4 residues coordinate Mg(2+): Asp-191, Glu-195, Glu-227, and Glu-231. Residue Ser-252 coordinates substrate.

The protein belongs to the ketol-acid reductoisomerase family. Mg(2+) serves as cofactor.

It carries out the reaction (2R)-2,3-dihydroxy-3-methylbutanoate + NADP(+) = (2S)-2-acetolactate + NADPH + H(+). It catalyses the reaction (2R,3R)-2,3-dihydroxy-3-methylpentanoate + NADP(+) = (S)-2-ethyl-2-hydroxy-3-oxobutanoate + NADPH + H(+). It participates in amino-acid biosynthesis; L-isoleucine biosynthesis; L-isoleucine from 2-oxobutanoate: step 2/4. It functions in the pathway amino-acid biosynthesis; L-valine biosynthesis; L-valine from pyruvate: step 2/4. Its function is as follows. Involved in the biosynthesis of branched-chain amino acids (BCAA). Catalyzes an alkyl-migration followed by a ketol-acid reduction of (S)-2-acetolactate (S2AL) to yield (R)-2,3-dihydroxy-isovalerate. In the isomerase reaction, S2AL is rearranged via a Mg-dependent methyl migration to produce 3-hydroxy-3-methyl-2-ketobutyrate (HMKB). In the reductase reaction, this 2-ketoacid undergoes a metal-dependent reduction by NADPH to yield (R)-2,3-dihydroxy-isovalerate. This chain is Ketol-acid reductoisomerase (NADP(+)), found in Cereibacter sphaeroides (strain ATCC 17025 / ATH 2.4.3) (Rhodobacter sphaeroides).